We begin with the raw amino-acid sequence, 335 residues long: Biotin synthase (335 aa).

A Radical SAM core domain is found at 41 to 269; sequence KQIQVCKLIS…TSDVRLSAGR (229 aa). Residues Cys56, Cys60, and Cys63 each contribute to the [4Fe-4S] cluster site. [2Fe-2S] cluster-binding residues include Cys100, Cys132, Cys192, and Arg264.

This sequence belongs to the radical SAM superfamily. Biotin synthase family. As to quaternary structure, homodimer. [4Fe-4S] cluster serves as cofactor. [2Fe-2S] cluster is required as a cofactor.

It carries out the reaction (4R,5S)-dethiobiotin + (sulfur carrier)-SH + 2 reduced [2Fe-2S]-[ferredoxin] + 2 S-adenosyl-L-methionine = (sulfur carrier)-H + biotin + 2 5'-deoxyadenosine + 2 L-methionine + 2 oxidized [2Fe-2S]-[ferredoxin]. The protein operates within cofactor biosynthesis; biotin biosynthesis; biotin from 7,8-diaminononanoate: step 2/2. Its function is as follows. Catalyzes the conversion of dethiobiotin (DTB) to biotin by the insertion of a sulfur atom into dethiobiotin via a radical-based mechanism. This chain is Biotin synthase, found in Nostoc sp. (strain PCC 7120 / SAG 25.82 / UTEX 2576).